A 365-amino-acid chain; its full sequence is Putrescine 2-hydroxylase (365 aa).

A Rieske domain is found at 44 to 141 (GHELMVPEVG…LQNWNGLLFE (98 aa)). 4 residues coordinate [2Fe-2S] cluster: cysteine 81, histidine 83, cysteine 100, and histidine 103.

This sequence belongs to the bacterial ring-hydroxylating dioxygenase alpha subunit family. The cofactor is [2Fe-2S] cluster.

In terms of biological role, rieske-type iron sulfur protein that can catalyze in vitro the 2-hydroxylation of putrescine, forming 2-hydroxyputrescine. May be involved in the biosynthesis of the cyclic hydroxamate siderophore alcaligin. This chain is Putrescine 2-hydroxylase, found in Ralstonia nicotianae (strain ATCC BAA-1114 / GMI1000) (Ralstonia solanacearum).